The primary structure comprises 123 residues: Small ribosomal subunit protein uS12 (123 aa).

The segment at 1 to 28 is disordered; the sequence is MPTIQQLIRKPRQPKVKRSKSMHLEQCP. A compositionally biased stretch (basic residues) spans 9–21; sequence RKPRQPKVKRSKS. Asp89 is subject to 3-methylthioaspartic acid.

Belongs to the universal ribosomal protein uS12 family. As to quaternary structure, part of the 30S ribosomal subunit. Contacts proteins S8 and S17. May interact with IF1 in the 30S initiation complex.

With S4 and S5 plays an important role in translational accuracy. Functionally, interacts with and stabilizes bases of the 16S rRNA that are involved in tRNA selection in the A site and with the mRNA backbone. Located at the interface of the 30S and 50S subunits, it traverses the body of the 30S subunit contacting proteins on the other side and probably holding the rRNA structure together. The combined cluster of proteins S8, S12 and S17 appears to hold together the shoulder and platform of the 30S subunit. The chain is Small ribosomal subunit protein uS12 from Ruegeria sp. (strain TM1040) (Silicibacter sp.).